Reading from the N-terminus, the 899-residue chain is Protein translocase subunit SecA (899 aa).

ATP-binding positions include Gln89, 107-111 (GEGKT), and Asp502. The Zn(2+) site is built by Cys882, Cys884, Cys893, and His894.

It belongs to the SecA family. Monomer and homodimer. Part of the essential Sec protein translocation apparatus which comprises SecA, SecYEG and auxiliary proteins SecDF-YajC and YidC. It depends on Zn(2+) as a cofactor.

It is found in the cell inner membrane. The protein localises to the cytoplasm. The enzyme catalyses ATP + H2O + cellular proteinSide 1 = ADP + phosphate + cellular proteinSide 2.. Part of the Sec protein translocase complex. Interacts with the SecYEG preprotein conducting channel. Has a central role in coupling the hydrolysis of ATP to the transfer of proteins into and across the cell membrane, serving both as a receptor for the preprotein-SecB complex and as an ATP-driven molecular motor driving the stepwise translocation of polypeptide chains across the membrane. In Allorhizobium ampelinum (strain ATCC BAA-846 / DSM 112012 / S4) (Agrobacterium vitis (strain S4)), this protein is Protein translocase subunit SecA.